A 428-amino-acid polypeptide reads, in one-letter code: BTB/POZ domain-containing protein KCTD16 (428 aa).

The region spanning 25 to 98 (EVVELNVGGQ…LRDRQVVLPD (74 aa)) is the BTB domain. Y112 carries the phosphotyrosine modification. Phosphoserine occurs at positions 130, 137, 143, and 146.

Homopentamer; forms an open pentamer. In contrast to other BTB domain-containing proteins, does not interact with CUL3. Interacts as a tetramer with GABRB1 and GABRB2.

The protein localises to the presynaptic cell membrane. The protein resides in the postsynaptic cell membrane. Functionally, auxiliary subunit of GABA-B receptors that determine the pharmacology and kinetics of the receptor response. Increases agonist potency and markedly alter the G-protein signaling of the receptors by accelerating onset and promoting desensitization. The chain is BTB/POZ domain-containing protein KCTD16 (KCTD16) from Homo sapiens (Human).